The sequence spans 272 residues: MSMSQSRAVQRSSSPNEDRGENQLVVYDLKGNDDTEEEVLPVQSQPLSSRTQCPSIGAFTVQCASCFKWRLMPSMQKYEEIREQLLENPFFCDTAREWKPDISCDVPADIYQDGTRLWAIDKPNISRPPAGWQRLLRIRGEGGTRFADVYYVAPSGKKLRSTVEVQKYLNDNSEYIGEGVKLSQFSFQIPKPLQDDYVRKRPARLLDSIDNTNTPVAKEANPLAWISPDDHISLQLGTPTESGLNNSHYQPSKKKKTSTLSIFGSNDELADR.

Residues 1 to 15 are compositionally biased toward polar residues; it reads MSMSQSRAVQRSSSP. Residues 1–24 form a disordered region; that stretch reads MSMSQSRAVQRSSSPNEDRGENQL. The segment at 53–112 adopts a CW-type zinc-finger fold; it reads CPSIGAFTVQCASCFKWRLMPSMQKYEEIREQLLENPFFCDTAREWKPDISCDVPADIYQ. The short motif at 62–104 is the MBD-associated domain (MAD) element; that stretch reads QCASCFKWRLMPSMQKYEEIREQLLENPFFCDTAREWKPDISC. Residues cysteine 63, cysteine 66, cysteine 92, and cysteine 104 each contribute to the Zn(2+) site. One can recognise an MBD domain in the interval 118–192; it reads WAIDKPNISR…SQFSFQIPKP (75 aa). A compositionally biased stretch (polar residues) spans 236-250; the sequence is LGTPTESGLNNSHYQ. The disordered stretch occupies residues 236–272; it reads LGTPTESGLNNSHYQPSKKKKTSTLSIFGSNDELADR.

As to quaternary structure, interacts (via MBD domain) with DDM1. In terms of tissue distribution, expressed in buds, flowers, stems, siliques and mature seeds.

Its subcellular location is the nucleus. Functionally, probable transcriptional regulator. The polypeptide is Methyl-CpG-binding domain-containing protein 2 (MBD2) (Arabidopsis thaliana (Mouse-ear cress)).